The sequence spans 142 residues: Ribosome maturation factor RimP (142 aa).

The protein belongs to the RimP family.

Its subcellular location is the cytoplasm. Functionally, required for maturation of 30S ribosomal subunits. This is Ribosome maturation factor RimP from Nitratiruptor sp. (strain SB155-2).